We begin with the raw amino-acid sequence, 358 residues long: Uroporphyrinogen decarboxylase (358 aa).

Substrate is bound by residues 28-32 (RQAGR), D78, Y154, S208, and H324.

Belongs to the uroporphyrinogen decarboxylase family. Homodimer.

The protein resides in the cytoplasm. The catalysed reaction is uroporphyrinogen III + 4 H(+) = coproporphyrinogen III + 4 CO2. Its pathway is porphyrin-containing compound metabolism; protoporphyrin-IX biosynthesis; coproporphyrinogen-III from 5-aminolevulinate: step 4/4. Catalyzes the decarboxylation of four acetate groups of uroporphyrinogen-III to yield coproporphyrinogen-III. This is Uroporphyrinogen decarboxylase from Acidiphilium cryptum (strain JF-5).